The sequence spans 70 residues: DNA-directed RNA polymerase subunit omega (70 aa).

This sequence belongs to the RNA polymerase subunit omega family. The RNAP catalytic core consists of 2 alpha, 1 beta, 1 beta' and 1 omega subunit. When a sigma factor is associated with the core the holoenzyme is formed, which can initiate transcription.

It catalyses the reaction RNA(n) + a ribonucleoside 5'-triphosphate = RNA(n+1) + diphosphate. Functionally, promotes RNA polymerase assembly. Latches the N- and C-terminal regions of the beta' subunit thereby facilitating its interaction with the beta and alpha subunits. The polypeptide is DNA-directed RNA polymerase subunit omega (Staphylococcus saprophyticus subsp. saprophyticus (strain ATCC 15305 / DSM 20229 / NCIMB 8711 / NCTC 7292 / S-41)).